The primary structure comprises 305 residues: Tetraspanin-12 (305 aa).

Over 1–12 (MAREDSVRCLRC) the chain is Cytoplasmic. S-palmitoyl cysteine attachment occurs at residues cysteine 9 and cysteine 12. The chain crosses the membrane as a helical span at residues 13-33 (LLYALNLLFWLMSISVLGVSA). Residues 34 to 59 (WIRDYLNNVLTLTAETRVEEAVILTY) lie on the Extracellular side of the membrane. A helical membrane pass occupies residues 60 to 80 (FPVVHPVMIAVCCFLILVGML). Over 81–89 (GYCGTVKRN) the chain is Cytoplasmic. A lipid anchor (S-palmitoyl cysteine) is attached at cysteine 83. The chain crosses the membrane as a helical span at residues 90–110 (LLLLVWYFGSLLVIFCVELAC). Residues 111-224 (GVWTYEQEIT…RGTKQLQVLR (114 aa)) lie on the Extracellular side of the membrane. Residues 225–245 (FLGISIGVTQILAMILTITLL) traverse the membrane as a helical segment. Residues 246–305 (WALYYDRRDPGADQIMSLKNDTSQQLSCHSVELLKPSLTGIFEHTSMANSFNTHFEMEEL) lie on the Cytoplasmic side of the membrane.

The protein belongs to the tetraspanin (TM4SF) family. In terms of assembly, component of a complex, at least composed of TSPAN12, FZD4 and norrin (NDP). In terms of processing, palmitoylated; required for interaction with ADAM10. The precise position of palmitoylated residues is unclear and occurs either on Cys-9, Cys-12 and/or Cys-83.

It localises to the cell membrane. In terms of biological role, regulator of cell surface receptor signal transduction. Plays a central role in retinal vascularization by regulating norrin (NDP) signal transduction. Acts in concert with norrin (NDP) to promote FZD4 multimerization and subsequent activation of FZD4, leading to promote accumulation of beta-catenin (CTNNB1) and stimulate LEF/TCF-mediated transcriptional programs. Suprisingly, it only activates the norrin (NDP)-dependent activation of FZD4, while it does not activate the Wnt-dependent activation of FZD4, suggesting the existence of a Wnt-independent signaling that also promote accumulation the beta-catenin (CTNNB1). In Gallus gallus (Chicken), this protein is Tetraspanin-12 (TSPAN12).